A 324-amino-acid chain; its full sequence is tRNA pseudouridine synthase B (324 aa).

The Nucleophile role is filled by aspartate 49.

This sequence belongs to the pseudouridine synthase TruB family. Type 1 subfamily.

It catalyses the reaction uridine(55) in tRNA = pseudouridine(55) in tRNA. Its function is as follows. Responsible for synthesis of pseudouridine from uracil-55 in the psi GC loop of transfer RNAs. The protein is tRNA pseudouridine synthase B of Brucella anthropi (strain ATCC 49188 / DSM 6882 / CCUG 24695 / JCM 21032 / LMG 3331 / NBRC 15819 / NCTC 12168 / Alc 37) (Ochrobactrum anthropi).